Here is a 623-residue protein sequence, read N- to C-terminus: Low affinity potassium transport system protein Kup (623 aa).

12 consecutive transmembrane segments (helical) span residues 9–29 (LPAITLAAIGVVYGDIGTSPL), 49–69 (VFGFLSLIFWLLVFVVSFKYL), 101–121 (VLVILGLIGGSFFYGEVVITP), 137–157 (PSLDPYIVPLSIVVLTLLFMI), 163–183 (GMVGKLFAPIMLAWFLVLAVL), 212–232 (AVSFAALGAVVLSITGVEALY), 247–267 (WFSVVLPSLVLNYFGQGALLL), 276–296 (PFFLLAPDWALIPMLILATLA), 337–357 (IYIPVVNWLLYFAVVIVIVSF), 363–383 (LAAAYGIAVTGTMVLTSILFA), 395–415 (ILVGLMVVAFLCVDVPLFSAN), and 419–439 (LFSGGWLPLSLGLVMFIIMTT).

This sequence belongs to the HAK/KUP transporter (TC 2.A.72) family.

It localises to the cell inner membrane. It catalyses the reaction K(+)(in) + H(+)(in) = K(+)(out) + H(+)(out). Responsible for the low-affinity transport of potassium into the cell. Likely operates as a K(+):H(+) symporter. The sequence is that of Low affinity potassium transport system protein Kup from Cronobacter sakazakii (strain ATCC BAA-894) (Enterobacter sakazakii).